Reading from the N-terminus, the 116-residue chain is uncharacterized protein (116 aa).

The Extracellular segment spans residues 1–46; sequence MGDNTTVAPGTNQTLVEEDLGAQITHTLMVQIMSKLNEMLTEYQPQ. N-linked (GlcNAc...) asparagine; by host glycans are attached at residues asparagine 4 and asparagine 12. A helical transmembrane segment spans residues 47–67; that stretch reads IIGIGATVLAIFVIMFISLLI. At 68 to 116 the chain is on the cytoplasmic side; the sequence is ILGCNCIRPYNFKNLKRYITGKASKSVEYQPLKMSAVNMGMDEDDEFLA.

The protein localises to the host membrane. This is an uncharacterized protein from Magallana gigas (Pacific oyster).